A 584-amino-acid chain; its full sequence is Sulfite reductase [NADPH] hemoprotein beta-component (584 aa).

4 residues coordinate [4Fe-4S] cluster: Cys-447, Cys-453, Cys-492, and Cys-496. Cys-496 is a siroheme binding site.

The protein belongs to the nitrite and sulfite reductase 4Fe-4S domain family. Alpha(8)-beta(8). The alpha component is a flavoprotein, the beta component is a hemoprotein. Siroheme serves as cofactor. [4Fe-4S] cluster is required as a cofactor.

The enzyme catalyses hydrogen sulfide + 3 NADP(+) + 3 H2O = sulfite + 3 NADPH + 4 H(+). It participates in sulfur metabolism; hydrogen sulfide biosynthesis; hydrogen sulfide from sulfite (NADPH route): step 1/1. Component of the sulfite reductase complex that catalyzes the 6-electron reduction of sulfite to sulfide. This is one of several activities required for the biosynthesis of L-cysteine from sulfate. The chain is Sulfite reductase [NADPH] hemoprotein beta-component from Colwellia psychrerythraea (strain 34H / ATCC BAA-681) (Vibrio psychroerythus).